The chain runs to 351 residues: Cardiolipin synthase (CMP-forming) (351 aa).

Positions P74–A120 are disordered. Low complexity predominate over residues P76–A120. Helical transmembrane passes span P139–V159, V191–A211, A251–G271, P280–L300, and L321–G341.

Belongs to the CDP-alcohol phosphatidyltransferase class-I family. It depends on Mn(2+) as a cofactor.

Its subcellular location is the mitochondrion inner membrane. The enzyme catalyses a CDP-1,2-diacyl-sn-glycerol + a 1,2-diacyl-sn-glycero-3-phospho-(1'-sn-glycerol) = a cardiolipin + CMP + H(+). Catalyzes the synthesis of cardiolipin (CL) (diphosphatidylglycerol) by specifically transferring a phosphatidyl group from CDP-diacylglycerol to phosphatidylglycerol (PG). CL is a key phospholipid in mitochondrial membranes and plays important roles in maintaining the functional integrity and dynamics of mitochondria under both optimal and stress conditions. Cannot catalyze the phosphatidyl group transfer from one PG molecule to another to form CL. In Chlamydomonas reinhardtii (Chlamydomonas smithii), this protein is Cardiolipin synthase (CMP-forming).